The primary structure comprises 267 residues: Small ribosomal subunit protein uS2 (267 aa).

Residues 247-267 (LEDDILEDVEDEEEGDPEQGE) are disordered.

Belongs to the universal ribosomal protein uS2 family.

The sequence is that of Small ribosomal subunit protein uS2 from Synechococcus sp. (strain JA-3-3Ab) (Cyanobacteria bacterium Yellowstone A-Prime).